A 326-amino-acid polypeptide reads, in one-letter code: Fructose-1,6-bisphosphatase class 1 (326 aa).

The Mg(2+) site is built by glutamate 90, aspartate 111, leucine 113, and aspartate 114. Residues 114 to 117 (DGSS), tyrosine 222, and lysine 253 contribute to the substrate site. Glutamate 259 provides a ligand contact to Mg(2+).

Belongs to the FBPase class 1 family. As to quaternary structure, homotetramer. It depends on Mg(2+) as a cofactor.

It localises to the cytoplasm. It catalyses the reaction beta-D-fructose 1,6-bisphosphate + H2O = beta-D-fructose 6-phosphate + phosphate. Its pathway is carbohydrate biosynthesis; gluconeogenesis. This Citrifermentans bemidjiense (strain ATCC BAA-1014 / DSM 16622 / JCM 12645 / Bem) (Geobacter bemidjiensis) protein is Fructose-1,6-bisphosphatase class 1.